The chain runs to 150 residues: Avidin-related protein 4/5 (150 aa).

The signal sequence occupies residues 1–24; it reads MVHTTSPLLLLLLLSLALVAPSLS. One can recognise an Avidin-like domain in the interval 26–147; sequence RKCSLTGKWT…GYNNFTRLCT (122 aa). An intrachain disulfide couples Cys28 to Cys105. Biotin is bound by residues Asn36, Ser40, Tyr57, Thr59, and Asp63. Residues Asn67 and Asn93 are each glycosylated (N-linked (GlcNAc...) asparagine). Biotin-binding residues include Ser95 and Asn140. Asn141 carries N-linked (GlcNAc...) asparagine glycosylation.

The protein belongs to the avidin/streptavidin family. In terms of assembly, homotetramer.

Its subcellular location is the secreted. Its function is as follows. Forms a strong non-covalent specific complex with biotin. The protein is Avidin-related protein 4/5 (AVR4) of Gallus gallus (Chicken).